The sequence spans 488 residues: MFILRVHSVDSERPISVEEEESGFTYASKRAQPPLKLIQPSLKLTDRKGLIHLYRKSSHSSLPNPSSRSTTLFIVAVPNYLSSLDFIRFCDSRISQVSDILFIRNDGMEDRYSVLITFSDQSEADGFYNNLNGKKFAPSEAEVCHILYVMSVEHTEFDEVAAEAPTGFTELPTCPICLERLDPDTSGIVSTLCDHSFQCSCTSKWTYLSCQVCRLCQQQDEILNCSICGKTENVWACLVCGFVGCGRYKEGHSIRHWKETHHCYSLDLRTQQIWDYVGDSYVHRLNHSKIDGKSVEMSTSCLSHQGDCGLCECSEDTGISGAIFNSKVDSIVIEYNDLLASQLKGQRQYYESLIVEARSKQESSIAEAVEQIVVNTMQELQNKIEKCEEEKSGITEVNTKLIKEQDTWRKKAKEIEEREAALLGSKDEMITDLQEQIRDITVFIEAKKTLKKMSSDTDGIREGTVLPVPISPEPVSSVRRQKKSNRRK.

The RING-type; degenerate zinc-finger motif lies at 174-214; that stretch reads CPICLERLDPDTSGIVSTLCDHSFQCSCTSKWTYLSCQVCR. A UBP-type; degenerate zinc finger spans residues 208–301; that stretch reads LSCQVCRLCQ…GKSVEMSTSC (94 aa). Residues cysteine 225, cysteine 228, cysteine 237, cysteine 240, cysteine 245, histidine 252, histidine 256, and histidine 262 each contribute to the Zn(2+) site. Positions 370 to 418 form a coiled coil; it reads EQIVVNTMQELQNKIEKCEEEKSGITEVNTKLIKEQDTWRKKAKEIEER. The interval 453-488 is disordered; sequence MSSDTDGIREGTVLPVPISPEPVSSVRRQKKSNRRK. Low complexity predominate over residues 465 to 478; the sequence is VLPVPISPEPVSSV. Over residues 479 to 488 the composition is skewed to basic residues; it reads RRQKKSNRRK.

Component of the heteromeric E3 ligase complex made of BRIZ1 and BRIZ2. Forms heterooligomers with BRIZ2 via coiled-coil domains.

It carries out the reaction S-ubiquitinyl-[E2 ubiquitin-conjugating enzyme]-L-cysteine + [acceptor protein]-L-lysine = [E2 ubiquitin-conjugating enzyme]-L-cysteine + N(6)-ubiquitinyl-[acceptor protein]-L-lysine.. Its pathway is protein modification; protein ubiquitination. Its function is as follows. RING-type ubiquitin E3 ligase required for seed germination and post-germination growth. This is BRAP2 RING ZnF UBP domain-containing protein 1 from Arabidopsis thaliana (Mouse-ear cress).